The following is a 552-amino-acid chain: Urocanate hydratase (552 aa).

Residues glycine 49–glycine 50, glutamine 127, glycine 173–glycine 175, aspartate 193, asparagine 239–alanine 240, glutamine 260–histidine 264, tyrosine 270–isoleucine 271, and tyrosine 319 each bind NAD(+). Cysteine 407 is an active-site residue. Glycine 489 is an NAD(+) binding site.

Belongs to the urocanase family. Requires NAD(+) as cofactor.

It localises to the cytoplasm. The enzyme catalyses 4-imidazolone-5-propanoate = trans-urocanate + H2O. It functions in the pathway amino-acid degradation; L-histidine degradation into L-glutamate; N-formimidoyl-L-glutamate from L-histidine: step 2/3. In terms of biological role, catalyzes the conversion of urocanate to 4-imidazolone-5-propionate. The protein is Urocanate hydratase of Bacillus cereus (strain ATCC 14579 / DSM 31 / CCUG 7414 / JCM 2152 / NBRC 15305 / NCIMB 9373 / NCTC 2599 / NRRL B-3711).